We begin with the raw amino-acid sequence, 67 residues long: DNA-directed RNA polymerase subunit omega (67 aa).

It belongs to the RNA polymerase subunit omega family. The RNAP catalytic core consists of 2 alpha, 1 beta, 1 beta' and 1 omega subunit. When a sigma factor is associated with the core the holoenzyme is formed, which can initiate transcription.

It carries out the reaction RNA(n) + a ribonucleoside 5'-triphosphate = RNA(n+1) + diphosphate. Its function is as follows. Promotes RNA polymerase assembly. Latches the N- and C-terminal regions of the beta' subunit thereby facilitating its interaction with the beta and alpha subunits. In Polynucleobacter asymbioticus (strain DSM 18221 / CIP 109841 / QLW-P1DMWA-1) (Polynucleobacter necessarius subsp. asymbioticus), this protein is DNA-directed RNA polymerase subunit omega.